A 77-amino-acid polypeptide reads, in one-letter code: UPF0291 protein Bsph_1689 (77 aa).

The protein belongs to the UPF0291 family.

The protein resides in the cytoplasm. This chain is UPF0291 protein Bsph_1689, found in Lysinibacillus sphaericus (strain C3-41).